The chain runs to 591 residues: Aspartate--tRNA(Asp/Asn) ligase (591 aa).

An L-aspartate-binding site is contributed by Glu-174. Positions 198-201 (QLFK) are aspartate. Arg-220 is an L-aspartate binding site. ATP is bound by residues 220–222 (RDE) and Gln-229. His-450 contributes to the L-aspartate binding site. Position 483 (Glu-483) interacts with ATP. Residue Arg-490 coordinates L-aspartate. 535-538 (GLDR) contributes to the ATP binding site.

The protein belongs to the class-II aminoacyl-tRNA synthetase family. Type 1 subfamily. In terms of assembly, homodimer.

The protein resides in the cytoplasm. It catalyses the reaction tRNA(Asx) + L-aspartate + ATP = L-aspartyl-tRNA(Asx) + AMP + diphosphate. Functionally, aspartyl-tRNA synthetase with relaxed tRNA specificity since it is able to aspartylate not only its cognate tRNA(Asp) but also tRNA(Asn). Reaction proceeds in two steps: L-aspartate is first activated by ATP to form Asp-AMP and then transferred to the acceptor end of tRNA(Asp/Asn). The sequence is that of Aspartate--tRNA(Asp/Asn) ligase from Pseudomonas syringae pv. tomato (strain ATCC BAA-871 / DC3000).